The primary structure comprises 777 residues: Transcriptional regulator QRICH1 (777 aa).

At M1 the chain carries N-acetylmethionine. In terms of domain architecture, CARD spans 6 to 48; the sequence is ENTISFEEYIRVKARSVPQHRMKEFLDSLASKGPEALQEFQQT. Disordered regions lie at residues 140-164 and 219-240; these read IQGQ…SPSQ and ALSP…VGTA. The residue at position 346 (S346) is a Phosphoserine. Glycyl lysine isopeptide (Lys-Gly) (interchain with G-Cter in SUMO2) cross-links involve residues K354 and K359. Positions 420 to 440 are disordered; sequence QQQPQQQTAQEQTPPPQQQQQ. A Phosphoserine modification is found at S465.

As to expression, expressed highly in prefrontal cortex, craniofacial area and near the limbs of mouse embryos. Expressed in heart, skeletal muscle, liver, kidney, lung, brain, spleen, intestine and growth plate in mice.

The protein resides in the nucleus. It localises to the cytoplasm. Its subcellular location is the cell membrane. Its function is as follows. Transcriptional regulator that acts as a mediator of the integrated stress response (ISR) through transcriptional control of protein homeostasis under conditions of ER stress. Controls the outcome of the unfolded protein response (UPR), an ER-stress response pathway that either promotes recovery of ER homeostasis and cell survival, or triggers the terminal UPR which elicits programmed cell death when ER stress is prolonged and unresolved. ER stress induces QRICH1 translation by a ribosome translation re-initiation mechanism in response to EIF2S1/eIF-2-alpha phosphorylation, and stress-induced QRICH1 regulates a transcriptional program associated with protein translation, protein secretion-mediated proteotoxicity and cell death during the terminal UPR. May cooperate with ATF4 transcription factor signaling to regulate ER homeostasis which is critical for cell viability. Up-regulates CASP3/caspase-3 activity in epithelial cells under ER stress. Central regulator of proteotoxicity associated with ER stress-mediated inflammatory diseases in the intestines and liver. Involved in chondrocyte hypertrophy, a process required for normal longitudinal bone growth. In Mus musculus (Mouse), this protein is Transcriptional regulator QRICH1.